The following is a 101-amino-acid chain: Small ribosomal subunit protein bS18c (101 aa).

Residues 82-101 (KQFERAESTPRTPGPRTRNK) form a disordered region.

The protein belongs to the bacterial ribosomal protein bS18 family. Part of the 30S ribosomal subunit.

The protein localises to the plastid. Its subcellular location is the chloroplast. This Platanus occidentalis (Sycamore) protein is Small ribosomal subunit protein bS18c.